Reading from the N-terminus, the 115-residue chain is Somatostatin-1 (115 aa).

The first 24 residues, M1–A24, serve as a signal peptide directing secretion. A propeptide spanning residues A25–R88 is cleaved from the precursor. Residues N65–L95 are disordered. The span at R75–R88 shows a compositional bias: basic and acidic residues. C104 and C115 are oxidised to a cystine.

It belongs to the somatostatin family.

It is found in the secreted. In terms of biological role, somatostatin inhibits the release of somatotropin. This chain is Somatostatin-1 (sst1), found in Protopterus annectens (African lungfish).